Reading from the N-terminus, the 1007-residue chain is MSIQSEQDFFKFEELCKDFYLKPEETIKIDDILHQYFLNPNFLIEYKQILSFTKNSYVVAQVIRGLIKCVTSFWTSLTPNQKNDMSKSIEHHCIGLRILKDIISEFNEYIGEHLTVLQHRNISISLRDNILLDIFCISLESLNYALANSMDEKFKSIKELALDLSYSCLSFDFIKTTSIDSSEEILTVQIPSQWKSTFDENNPLELFFKIYKQYHSTKSLECILQIVSIRRSFFTTEDERVKFLASIVQYTTEILKSNIGFNEPNNHLVFSRVIERLKTNYHLNNLVTVVGYNDWISNLSTFTIDTLKNPQFSPNSIYFLLTLWAKLVSSIIYVKGDPSKTYLEKYSPIIMESFINSKIDNSYSDEEDEHLMDYEKMVEILEGIPHLGRITYQATCRQIILLFDSISSKFLNETNPTQLEVYERQCAWLVYIIGCLILGRTSINSSEEHDKIDGELSVRVFILIGYNDKKLSAESNTQYQYRTSRISLELSFIYFMQNFRRIYIGENSISSSKIYQRISELSGPTDHTSVLFSIVQKIGFNFKYWAENDEIIKKSLDMFWESVNGHSTSKMLIDNKITKDILKTHSSQVFPFLEKNSNPRNRTSLYKTIGKLLFTDENMGFFDEFIAPFDDTIKHLLNISTPEQFRTEEIKRKVIGLLRDLRGIITSANSKRSYLLFFEWIHLNFSEVLIKIINVWVDSPEVTTSLLKFISEFVFNRQSRLIFDSSSANGFIIFRDTSKILVSYASLILKANISKQDLYKFKIKGIQTSMLLFTRCLVGGYCNFGVFELYGDPSFTSAIDYIFQLCLSVSLDELMSFPKASKAYVTMLEALCLGHTLSIIQLNQQYFIHIMKSLHRCLDSQDVTMSSSSCTSIEKIITVCYYHLKKKNSQCLQAIHQNFFSNSNILYEIIDKIISIIIYEDNFNQFMFSKLLLTCIIFHQDTFTTLKQKYIHSFNSQCPEKVEKAFVQLMENTLDNLETKNKDKFTSNVSIFRKEMKLISSSTGRYL.

It belongs to the exportin family.

The protein localises to the nucleus. The protein resides in the cytoplasm. It is found in the nuclear pore complex. In terms of biological role, mediates the nuclear export of proteins (cargos) with broad substrate specificity. The chain is Exportin-7 (xpo7) from Dictyostelium discoideum (Social amoeba).